The primary structure comprises 690 residues: Calpain-9 (690 aa).

Residues 1 to 24 (MPYLHRSLRPQPQPVPRDARTVHS) are disordered. The region spanning 42 to 337 (LFEDADFPAS…FDKVEICNLT (296 aa)) is the Calpain catalytic domain. 3 residues coordinate Ca(2+): Leu-81, Gly-83, and Asp-88. Cys-97 is a catalytic residue. A Ca(2+)-binding site is contributed by Glu-167. Residues His-254 and Asn-278 contribute to the active site. Residues Glu-284, Asp-291, Leu-312, Asp-314, and Glu-316 each coordinate Ca(2+). The segment at 338-521 (PDALEDNTLH…PQEEETEEER (184 aa)) is domain III. The interval 522–690 (QFRALFRRIA…NEFINLTMNI (169 aa)) is domain IV. EF-hand domains lie at 534–552 (DMEVSAEELEYVLNAVLQK), 561–589 (LSLLSCRNIISLMDTSGNGKMEFEEFRVF), and 591–626 (DKLRYWMDLFLQFDVDKSGTMSSYELRTALKAAGFQ). The Ca(2+) site is built by Asp-574, Ser-576, Asn-578, Lys-580, Glu-585, Asp-604, Asp-606, Ser-608, Thr-610, and Glu-615.

The protein belongs to the peptidase C2 family. Predominantly expressed in stomach and small intestine, although low levels of expression in other organs.

Functionally, calcium-regulated non-lysosomal thiol-protease. In Rattus norvegicus (Rat), this protein is Calpain-9 (Capn9).